A 273-amino-acid polypeptide reads, in one-letter code: Putative pyruvate, phosphate dikinase regulatory protein 2 (273 aa).

151-158 (GISRTSKT) contributes to the ADP binding site.

It belongs to the pyruvate, phosphate/water dikinase regulatory protein family. PDRP subfamily.

It carries out the reaction N(tele)-phospho-L-histidyl/L-threonyl-[pyruvate, phosphate dikinase] + ADP = N(tele)-phospho-L-histidyl/O-phospho-L-threonyl-[pyruvate, phosphate dikinase] + AMP + H(+). The catalysed reaction is N(tele)-phospho-L-histidyl/O-phospho-L-threonyl-[pyruvate, phosphate dikinase] + phosphate + H(+) = N(tele)-phospho-L-histidyl/L-threonyl-[pyruvate, phosphate dikinase] + diphosphate. Bifunctional serine/threonine kinase and phosphorylase involved in the regulation of the pyruvate, phosphate dikinase (PPDK) by catalyzing its phosphorylation/dephosphorylation. This chain is Putative pyruvate, phosphate dikinase regulatory protein 2, found in Staphylococcus saprophyticus subsp. saprophyticus (strain ATCC 15305 / DSM 20229 / NCIMB 8711 / NCTC 7292 / S-41).